The following is a 251-amino-acid chain: Triosephosphate isomerase (251 aa).

9–11 (NWK) contributes to the substrate binding site. His-95 acts as the Electrophile in catalysis. Catalysis depends on Glu-167, which acts as the Proton acceptor. Substrate-binding positions include Gly-173, Ser-213, and 234 to 235 (GG). Residue Ser-213 is modified to Phosphoserine.

It belongs to the triosephosphate isomerase family. In terms of assembly, homodimer.

The protein localises to the cytoplasm. It catalyses the reaction D-glyceraldehyde 3-phosphate = dihydroxyacetone phosphate. It participates in carbohydrate biosynthesis; gluconeogenesis. It functions in the pathway carbohydrate degradation; glycolysis; D-glyceraldehyde 3-phosphate from glycerone phosphate: step 1/1. In terms of biological role, involved in the gluconeogenesis. Catalyzes stereospecifically the conversion of dihydroxyacetone phosphate (DHAP) to D-glyceraldehyde-3-phosphate (G3P). The sequence is that of Triosephosphate isomerase from Bacillus cytotoxicus (strain DSM 22905 / CIP 110041 / 391-98 / NVH 391-98).